The chain runs to 127 residues: Protein pkiA (127 aa).

Residues 16 to 127 enclose the HIT domain; that stretch reads IFAKIISGAI…GGRQMNWPPG (112 aa).

The sequence is that of Protein pkiA (pkiA) from Dictyostelium discoideum (Social amoeba).